We begin with the raw amino-acid sequence, 301 residues long: DNA repair protein RecO (301 aa).

The disordered stretch occupies residues 272-301; it reads PTPSGQGSPVAAAAFSEEDSETLGSNLKKL.

It belongs to the RecO family.

Involved in DNA repair and RecF pathway recombination. This is DNA repair protein RecO from Synechococcus sp. (strain JA-3-3Ab) (Cyanobacteria bacterium Yellowstone A-Prime).